The sequence spans 547 residues: Chaperonin GroEL (547 aa).

ATP contacts are provided by residues 30-33 (TLGP), lysine 51, 87-91 (DGTTT), glycine 415, 479-481 (NAA), and aspartate 495.

Belongs to the chaperonin (HSP60) family. As to quaternary structure, forms a cylinder of 14 subunits composed of two heptameric rings stacked back-to-back. Interacts with the co-chaperonin GroES.

It is found in the cytoplasm. The enzyme catalyses ATP + H2O + a folded polypeptide = ADP + phosphate + an unfolded polypeptide.. Its function is as follows. Together with its co-chaperonin GroES, plays an essential role in assisting protein folding. The GroEL-GroES system forms a nano-cage that allows encapsulation of the non-native substrate proteins and provides a physical environment optimized to promote and accelerate protein folding. This chain is Chaperonin GroEL, found in Cupriavidus necator (strain ATCC 17699 / DSM 428 / KCTC 22496 / NCIMB 10442 / H16 / Stanier 337) (Ralstonia eutropha).